A 476-amino-acid chain; its full sequence is MEGPPLSPAPADNVTLNVSCGRPATLFDWADHRLISLLALAFLNLMVVAGNLLVVMAVFVHSKLRTVTNLFIVSLACADLLVGMLVLPFSATLEVLDVWLYGDVWCSVWLAVDVWMCTSSILNLCAISLDRYLAVSQPISYPSLMSTRRAKQLIAAVWVLSFVICFPPLVGWNDRPGTLIGSRGSSACRLTCELTNERGYVIYSALGSFFLPSTVMLFFYGRIYRTAVSTTRAIAQGFRTTKEDEEGRLTLRIHRGRSVTQRAEQAAAGGARAHGQVRLTLSEPGARRQNKPSFVVHCREDSRAKNQYEIYTVVEGDSRPGRRVPQPQRPAKKLSSASQSSEDDSRPPRFISRVSRRNVRHQARRFRMETKAAKTVGIIVGLFILCWLPFFVCYLVRGFCADCVPPLLFSVFFWLGYCNSAVNPCVYALCSRDFRFAFSSILCKCVCRRGAMERRFRRTLLVGNRSQTEEDCEVAD.

Residues 1–36 (MEGPPLSPAPADNVTLNVSCGRPATLFDWADHRLIS) are Extracellular-facing. 2 N-linked (GlcNAc...) asparagine glycosylation sites follow: Asn13 and Asn17. A helical membrane pass occupies residues 37–60 (LLALAFLNLMVVAGNLLVVMAVFV). At 61-69 (HSKLRTVTN) the chain is on the cytoplasmic side. The chain crosses the membrane as a helical span at residues 70-93 (LFIVSLACADLLVGMLVLPFSATL). The Extracellular portion of the chain corresponds to 94 to 103 (EVLDVWLYGD). Residues 104-127 (VWCSVWLAVDVWMCTSSILNLCAI) traverse the membrane as a helical segment. An intrachain disulfide couples Cys106 to Cys192. Residues 128–152 (SLDRYLAVSQPISYPSLMSTRRAKQ) lie on the Cytoplasmic side of the membrane. A helical transmembrane segment spans residues 153–172 (LIAAVWVLSFVICFPPLVGW). Over 173 to 200 (NDRPGTLIGSRGSSACRLTCELTNERGY) the chain is Extracellular. A helical transmembrane segment spans residues 201–221 (VIYSALGSFFLPSTVMLFFYG). Residues 222-375 (RIYRTAVSTT…FRMETKAAKT (154 aa)) are Cytoplasmic-facing. The segment covering 266–278 (AAAGGARAHGQVR) has biased composition (low complexity). Disordered stretches follow at residues 266-293 (AAAG…NKPS) and 317-351 (DSRP…PRFI). A helical transmembrane segment spans residues 376–396 (VGIIVGLFILCWLPFFVCYLV). Topologically, residues 397–406 (RGFCADCVPP) are extracellular. The chain crosses the membrane as a helical span at residues 407-430 (LLFSVFFWLGYCNSAVNPCVYALC). The Cytoplasmic segment spans residues 431–476 (SRDFRFAFSSILCKCVCRRGAMERRFRRTLLVGNRSQTEEDCEVAD).

The protein belongs to the G-protein coupled receptor 1 family.

The protein resides in the cell membrane. In terms of biological role, orphan G-protein coupled receptor. This chain is Probable G-protein coupled receptor No9, found in Amphibalanus amphitrite (Striped barnacle).